Reading from the N-terminus, the 62-residue chain is Conotoxin Cal12.2e (62 aa).

The first 19 residues, 1-19 (MKLTCVLVVLLLVLPFGDL), serve as a signal peptide directing secretion.

It belongs to the conotoxin O1 superfamily. Contains 4 disulfide bonds. Expressed by the venom duct.

It is found in the secreted. Probable neurotoxin. The protein is Conotoxin Cal12.2e of Californiconus californicus (California cone).